Here is a 120-residue protein sequence, read N- to C-terminus: uncharacterized protein (120 aa).

2 N-linked (GlcNAc...) asparagine; by host glycosylation sites follow: N29 and N68. The chain crosses the membrane as a helical span at residues 74-94 (IFNGLGFILIVIFIYLLIITL).

This sequence belongs to the asfivirus B117L family.

The protein localises to the host membrane. It localises to the virion. This is an uncharacterized protein from Ornithodoros (relapsing fever ticks).